A 116-amino-acid polypeptide reads, in one-letter code: Large ribosomal subunit protein bL17 (116 aa).

This sequence belongs to the bacterial ribosomal protein bL17 family. As to quaternary structure, part of the 50S ribosomal subunit. Contacts protein L32.

The polypeptide is Large ribosomal subunit protein bL17 (Parasynechococcus marenigrum (strain WH8102)).